An 83-amino-acid chain; its full sequence is Toxin To12 (83 aa).

A signal peptide spans 1 to 19 (MKGLILFICGFMMIGVILA). Positions 20–82 (KEGYPMDHEG…VWDYYNNKCG (63 aa)) constitute an LCN-type CS-alpha/beta domain. Intrachain disulfides connect C30/C81, C34/C57, C42/C62, and C46/C64. The residue at position 81 (C81) is a Cysteine amide.

The protein belongs to the long (4 C-C) scorpion toxin superfamily. Sodium channel inhibitor family. Beta subfamily. Expressed by the venom gland.

The protein localises to the secreted. Beta toxins bind voltage-independently at site-4 of sodium channels (Nav) and shift the voltage of activation toward more negative potentials thereby affecting sodium channel activation and promoting spontaneous and repetitive firing. The protein is Toxin To12 of Tityus obscurus (Amazonian scorpion).